We begin with the raw amino-acid sequence, 512 residues long: Amidase 2 (512 aa).

Residues Lys-122 and Ser-197 each act as charge relay system in the active site. Residues Ser-197 and 218–221 (IGGS) each bind substrate. Catalysis depends on Ser-221, which acts as the Acyl-ester intermediate.

It belongs to the amidase family.

The enzyme catalyses a monocarboxylic acid amide + H2O = a monocarboxylate + NH4(+). It functions in the pathway xenobiotic degradation. In terms of biological role, amidase; part of the Fusarium detoxification of benzoxazolinone cluster 2 (FDB2) involved in the degradation of benzoxazolinones produced by the host plant. Maize, wheat, and rye produce the 2 benzoxazinone phytoanticipins 2,4-dihy-droxy-7-methoxy-1,4-benzoxazin-3-one (DIMBOA) and 2,4-dihydroxy-1,4-benzoxazin-3-one (DIBOA) that, due to their inherent instability once released, spontaneously degrade to the more stable corresponding benzoxazolinones, 6-methoxy-2-benzoxazolinone (MBOA) and 2-benzoxazolinone (BOA), respectively. The first step in the detoxification of benzoxazolinones involves the hydrolysis of the cyclic ester bond of benzoxazolinones by the FDB1 cluster gamma-lactamase MBL1 to aminophenols. MBL1 is able to convert BOA into 2-aminophenol (2-AP), as well as MBOA into 5-methoxy-2-aminophenol (2-AMP). The FDB2 cluster N-malonyltransferase FDB2/NAT1 then metabolizes aminophenols via N-malonylation to non-toxic malonamic acids. FDB2/NAT1 converts 2-AP into N-(2-hydroxyphenyl) malonamic acid (HPMA) and 2-AMP into N-(2-hydroxy-4-methoxyphenyl) malonamic acid (HMPMA). The duplicated dienlactone hydrolases DLH1 and DLH2 may provide redundant function for hydrolyzing the lactone moiety in the BOA molecule. The roles of the amidases an other enzymes encoded by the 2 FDB clusters have not been identified so far. The chain is Amidase 2 from Gibberella moniliformis (strain M3125 / FGSC 7600) (Maize ear and stalk rot fungus).